The following is a 432-amino-acid chain: 3-phosphoshikimate 1-carboxyvinyltransferase (432 aa).

Lys22, Ser23, and Arg27 together coordinate 3-phosphoshikimate. Lys22 contributes to the phosphoenolpyruvate binding site. Gly96 and Arg127 together coordinate phosphoenolpyruvate. Residues Ser173, Ser174, Gln175, Ser201, Asp316, Asn339, and Lys343 each coordinate 3-phosphoshikimate. Gln175 contacts phosphoenolpyruvate. Asp316 acts as the Proton acceptor in catalysis. Arg347, Arg391, and Lys416 together coordinate phosphoenolpyruvate.

It belongs to the EPSP synthase family. As to quaternary structure, monomer.

It is found in the cytoplasm. It catalyses the reaction 3-phosphoshikimate + phosphoenolpyruvate = 5-O-(1-carboxyvinyl)-3-phosphoshikimate + phosphate. It functions in the pathway metabolic intermediate biosynthesis; chorismate biosynthesis; chorismate from D-erythrose 4-phosphate and phosphoenolpyruvate: step 6/7. Catalyzes the transfer of the enolpyruvyl moiety of phosphoenolpyruvate (PEP) to the 5-hydroxyl of shikimate-3-phosphate (S3P) to produce enolpyruvyl shikimate-3-phosphate and inorganic phosphate. This chain is 3-phosphoshikimate 1-carboxyvinyltransferase, found in Haemophilus influenzae (strain 86-028NP).